The primary structure comprises 63 residues: Sec-independent protein translocase protein TatA (63 aa).

Residues 1 to 21 (MGSLSMWHWLIVLVIVLLLFG) form a helical membrane-spanning segment. A disordered region spans residues 43-63 (MTDEDAPETAKTVDHKADETK). Over residues 53 to 63 (KTVDHKADETK) the composition is skewed to basic and acidic residues.

Belongs to the TatA/E family. The Tat system comprises two distinct complexes: a TatABC complex, containing multiple copies of TatA, TatB and TatC subunits, and a separate TatA complex, containing only TatA subunits. Substrates initially bind to the TatABC complex, which probably triggers association of the separate TatA complex to form the active translocon.

It is found in the cell inner membrane. Its function is as follows. Part of the twin-arginine translocation (Tat) system that transports large folded proteins containing a characteristic twin-arginine motif in their signal peptide across membranes. TatA could form the protein-conducting channel of the Tat system. This Rhizobium etli (strain ATCC 51251 / DSM 11541 / JCM 21823 / NBRC 15573 / CFN 42) protein is Sec-independent protein translocase protein TatA.